The chain runs to 199 residues: Probable GTP-binding protein EngB (199 aa).

Residues 28–199 (DLPEIALAGR…DSWDAILEQV (172 aa)) form the EngB-type G domain. GTP contacts are provided by residues 36 to 43 (GRSNVGKS), 63 to 67 (GKTQL), 81 to 84 (DVPG), 148 to 151 (TKAD), and 180 to 182 (FSS). 2 residues coordinate Mg(2+): serine 43 and threonine 65.

The protein belongs to the TRAFAC class TrmE-Era-EngA-EngB-Septin-like GTPase superfamily. EngB GTPase family. Requires Mg(2+) as cofactor.

In terms of biological role, necessary for normal cell division and for the maintenance of normal septation. This is Probable GTP-binding protein EngB from Streptococcus pyogenes serotype M49 (strain NZ131).